The chain runs to 488 residues: Leucine-rich repeat-containing protein 74A (488 aa).

LRR repeat units lie at residues 134-155 (AVTK…SLVE), 162-182 (YLQE…RIIS), 191-212 (SIWS…LLCQ), 219-239 (QIKK…EHLG), 247-268 (GLTS…ALCN), 275-296 (TLTK…ALGE), 303-324 (CLVY…KISK), and 331-351 (SLRV…ILLI).

This chain is Leucine-rich repeat-containing protein 74A, found in Homo sapiens (Human).